Here is a 63-residue protein sequence, read N- to C-terminus: UPF0337 protein PSPTO_1596 (63 aa).

Residues 20–63 (KQAVGKATDNTKLQAEGKAQELKGEGQQAKGEVKDAVKKGVDKV) are disordered. Residues 50 to 63 (GEVKDAVKKGVDKV) are compositionally biased toward basic and acidic residues.

This sequence belongs to the UPF0337 (CsbD) family.

This is UPF0337 protein PSPTO_1596 from Pseudomonas syringae pv. tomato (strain ATCC BAA-871 / DC3000).